A 445-amino-acid polypeptide reads, in one-letter code: Gastrula zinc finger protein 5-1 (445 aa).

The disordered stretch occupies residues 1–38; sequence MLQIKTEKEELDCGDDQNPKESSAVPLTDGASPEPQPQ. Ser-89 carries the post-translational modification Phosphoserine; by CK2. Residues 185–210 form a C2H2-type 1; atypical zinc finger; sequence FICCKCGDSFAHHSDLHTHLYACAGH. 7 C2H2-type zinc fingers span residues 239 to 261, 267 to 289, 295 to 317, 323 to 345, 351 to 373, 379 to 401, and 407 to 429; these read FKCT…HRIH, FTCT…SRTH, YVCT…MRTH, YACK…QNSH, FICT…QRTH, FICS…QMIH, and FSCS…QRVH.

Functionally, binds to RNA homomers. This chain is Gastrula zinc finger protein 5-1, found in Xenopus laevis (African clawed frog).